The sequence spans 341 residues: tRNA N6-adenosine threonylcarbamoyltransferase (341 aa).

Residues H116 and H120 each coordinate Fe cation. Substrate contacts are provided by residues 139 to 143 (LVSGG), D172, G185, and N274. Fe cation is bound at residue D302.

The protein belongs to the KAE1 / TsaD family. It depends on Fe(2+) as a cofactor.

The protein localises to the cytoplasm. The enzyme catalyses L-threonylcarbamoyladenylate + adenosine(37) in tRNA = N(6)-L-threonylcarbamoyladenosine(37) in tRNA + AMP + H(+). Required for the formation of a threonylcarbamoyl group on adenosine at position 37 (t(6)A37) in tRNAs that read codons beginning with adenine. Is involved in the transfer of the threonylcarbamoyl moiety of threonylcarbamoyl-AMP (TC-AMP) to the N6 group of A37, together with TsaE and TsaB. TsaD likely plays a direct catalytic role in this reaction. The sequence is that of tRNA N6-adenosine threonylcarbamoyltransferase from Vesicomyosocius okutanii subsp. Calyptogena okutanii (strain HA).